The chain runs to 512 residues: Glutamyl-tRNA(Gln) amidotransferase subunit A (512 aa).

Residues lysine 82 and serine 157 each act as charge relay system in the active site. The active-site Acyl-ester intermediate is the serine 181.

It belongs to the amidase family. GatA subfamily. Heterotrimer of A, B and C subunits.

It carries out the reaction L-glutamyl-tRNA(Gln) + L-glutamine + ATP + H2O = L-glutaminyl-tRNA(Gln) + L-glutamate + ADP + phosphate + H(+). Allows the formation of correctly charged Gln-tRNA(Gln) through the transamidation of misacylated Glu-tRNA(Gln) in organisms which lack glutaminyl-tRNA synthetase. The reaction takes place in the presence of glutamine and ATP through an activated gamma-phospho-Glu-tRNA(Gln). In Bordetella pertussis (strain Tohama I / ATCC BAA-589 / NCTC 13251), this protein is Glutamyl-tRNA(Gln) amidotransferase subunit A.